The following is a 143-amino-acid chain: Ribosome-binding factor A (143 aa).

Residues 123–143 (DKSLQENYKQNDKETKAEKLR) are disordered.

Belongs to the RbfA family. Monomer. Binds 30S ribosomal subunits, but not 50S ribosomal subunits or 70S ribosomes.

It localises to the cytoplasm. One of several proteins that assist in the late maturation steps of the functional core of the 30S ribosomal subunit. Associates with free 30S ribosomal subunits (but not with 30S subunits that are part of 70S ribosomes or polysomes). Required for efficient processing of 16S rRNA. May interact with the 5'-terminal helix region of 16S rRNA. This Francisella tularensis subsp. mediasiatica (strain FSC147) protein is Ribosome-binding factor A.